A 348-amino-acid chain; its full sequence is Cuticle collagen rol-6 (348 aa).

The segment at 76–348 is disordered; it reads GYGATGVQPP…SARRHRKFQL (273 aa). Residues 120 to 137 show a composition bias toward gly residues; the sequence is PGGGFPDGPFPNGGGPRG. Triple-helical region regions lie at residues 152–178, 196–258, 261–284, and 288–323; these read GPAG…DGKD, GPLG…DGER, GRPG…TGRD, and GQSG…PGKD. A compositionally biased stretch (low complexity) spans 194-231; that stretch reads PQGPLGPQGPNGAPGLRGMRGARGQPGRPGRDGNPGMP. A compositionally biased stretch (gly residues) spans 297 to 306; that stretch reads GLQGYGGAAG. Basic and acidic residues predominate over residues 322-338; it reads KDAEYCKCPGREGDAGR. Basic residues predominate over residues 339–348; the sequence is SARRHRKFQL.

Belongs to the cuticular collagen family. Collagen polypeptide chains are complexed within the cuticle by disulfide bonds and other types of covalent cross-links. In terms of tissue distribution, localizes in stripes along the alae.

Nematode cuticles are composed largely of collagen-like proteins. The cuticle functions both as an exoskeleton and as a barrier to protect the worm from its environment. May play a role in cuticle remodeling in response to the environment. Involved in body morphogenesis. This Caenorhabditis elegans protein is Cuticle collagen rol-6 (rol-6).